Here is a 200-residue protein sequence, read N- to C-terminus: Prolactin (200 aa).

Intrachain disulfides connect C4-C11, C59-C175, and C192-C200.

Belongs to the somatotropin/prolactin family. As to expression, pituitary gland.

It localises to the secreted. The protein is Prolactin (prl) of Protopterus aethiopicus (Marbled lungfish).